The chain runs to 374 residues: 5-methylthioribulose-1-phosphate isomerase (374 aa).

This sequence belongs to the RuBisCO large chain family. Type IV subfamily.

The catalysed reaction is 5-(methylsulfanyl)-D-ribulose 1-phosphate = S-methyl-1-thio-D-xylulose 5-phosphate. It carries out the reaction 5-(methylsulfanyl)-D-ribulose 1-phosphate = 1-(methylsulfanyl)ribulose 5-phosphate. Its pathway is amino-acid biosynthesis; L-methionine biosynthesis via salvage pathway. It participates in metabolic intermediate biosynthesis; 1-deoxy-D-xylulose 5-phosphate biosynthesis. In terms of biological role, catalyzes the conversion of 5-methylthio-D-ribulose 1-phosphate (MTRu-1P) to a 3:1 mixture of 1-methylthioxylulose 5-phosphate (MTXu-5P) and 1-methylthioribulose 5-phosphate (MTRu-5P). Involved in the MTA-isoprenoid shunt of the methionine salvage pathway. This is 5-methylthioribulose-1-phosphate isomerase from Rhodospirillum rubrum (strain ATCC 11170 / ATH 1.1.1 / DSM 467 / LMG 4362 / NCIMB 8255 / S1).